The following is a 148-amino-acid chain: Transcription antitermination protein NusB (148 aa).

This sequence belongs to the NusB family.

Involved in transcription antitermination. Required for transcription of ribosomal RNA (rRNA) genes. Binds specifically to the boxA antiterminator sequence of the ribosomal RNA (rrn) operons. This chain is Transcription antitermination protein NusB, found in Novosphingobium aromaticivorans (strain ATCC 700278 / DSM 12444 / CCUG 56034 / CIP 105152 / NBRC 16084 / F199).